Consider the following 224-residue polypeptide: UPF0111 protein CPn_0681/CP_0066/CPj0681/CpB0708 (224 aa).

The protein belongs to the UPF0111 family.

This Chlamydia pneumoniae (Chlamydophila pneumoniae) protein is UPF0111 protein CPn_0681/CP_0066/CPj0681/CpB0708.